A 106-amino-acid polypeptide reads, in one-letter code: Small cardioactive peptide-related peptide (106 aa).

Positions 1–20 are cleaved as a signal peptide; the sequence is MFCKHLSFVAITICFLLVLA. Positions 21–41 are cleaved as a propeptide — amino-terminal spacer peptide; sequence KTENEIQQKNIKFDQRTWRNM. A Glutamine amide modification is found at glutamine 52. Positions 55-106 are cleaved as a propeptide — carboxy-terminal spacer peptide; sequence SDNQPDYTCCGMPLTKYVGICPIGMECCPGLKKVLQKSGQRTIYSVCVADAY.

As to expression, expression is seen in the peripheral and central nervous systems in tissues such as the brain, the inferior buccal ganglion, the gastric ganglion, the olfactory lobe, the peduncle lobe and the optic lobe. Expression in the brain is distributed in the median inferior frontal lobe, the superior buccal lobe, the prebranchial lobe and the pedal lobe. Not expressed in the vasomotor lobe or the palliovisceral lobe that controls the cardiac system.

The protein localises to the secreted. Its function is as follows. Evokes contractions in the radula protractor muscle, and may regulate feeding behavior and gut motility by controlling muscle contraction of the buccal mass. The sequence is that of Small cardioactive peptide-related peptide from Octopus vulgaris (Common octopus).